The following is a 454-amino-acid chain: Chromosomal replication initiator protein DnaA (454 aa).

Positions 1-71 are domain I, interacts with DnaA modulators; sequence MTKEQWGQLQ…HEVRQEDPAV (71 aa). The segment at 71–112 is domain II; sequence VRRLRFAVPSHVNATTKPARPAQATAPRAPAEKTPRSTLSTA. Residues 82–108 are disordered; the sequence is VNATTKPARPAQATAPRAPAEKTPRST. The segment covering 84-99 has biased composition (low complexity); sequence ATTKPARPAQATAPRA. A domain III, AAA+ region region spans residues 113-334; it reads PLDARFTFDN…GALTRLCAFA (222 aa). Residues Gly-157, Gly-159, Lys-160, and Thr-161 each contribute to the ATP site. The tract at residues 335–454 is domain IV, binds dsDNA; the sequence is SLVGREIDME…LELLRRALEE (120 aa).

It belongs to the DnaA family. As to quaternary structure, oligomerizes as a right-handed, spiral filament on DNA at oriC.

Its subcellular location is the cytoplasm. Its function is as follows. Plays an essential role in the initiation and regulation of chromosomal replication. ATP-DnaA binds to the origin of replication (oriC) to initiate formation of the DNA replication initiation complex once per cell cycle. Binds the DnaA box (a 9 base pair repeat at the origin) and separates the double-stranded (ds)DNA. Forms a right-handed helical filament on oriC DNA; dsDNA binds to the exterior of the filament while single-stranded (ss)DNA is stabiized in the filament's interior. The ATP-DnaA-oriC complex binds and stabilizes one strand of the AT-rich DNA unwinding element (DUE), permitting loading of DNA polymerase. After initiation quickly degrades to an ADP-DnaA complex that is not apt for DNA replication. Binds acidic phospholipids. This is Chromosomal replication initiator protein DnaA from Roseobacter denitrificans (strain ATCC 33942 / OCh 114) (Erythrobacter sp. (strain OCh 114)).